A 305-amino-acid polypeptide reads, in one-letter code: MGDETIKVAILGSGNIGTDLMYKLLDHPGSMELVLLAGIDPHSEGLARARSLGVATSDQGIAAVLERPEIQIVFDATSAKAHVRHAKLLHETGRIAIDLTPAARGPYVVPPVNLTQHLDALNVNLITCGGQATIPLVYAVSRVTPVCYAEIVSTVASRSAGPGTRQNIDEFTFTTAHGLEVIGGAQQGKAIIILNPAEPPILMRNTVYAIPAGDFDPAQVRDSIEAIVAEVQQYVPGYRLTNPPVFNMRETPWGRKPVVTALLEVEGAGHFLPTYAGNLDIMTASARRVGEVFAQQLLSRREVLV.

13-16 contacts NAD(+); that stretch reads SGNI. Cys-128 (acyl-thioester intermediate) is an active-site residue. NAD(+) is bound by residues 159–167 and Asn-278; that span reads SAGPGTRQN.

This sequence belongs to the acetaldehyde dehydrogenase family.

It carries out the reaction acetaldehyde + NAD(+) + CoA = acetyl-CoA + NADH + H(+). The protein is Acetaldehyde dehydrogenase of Roseiflexus sp. (strain RS-1).